The chain runs to 307 residues: Protein FAM76A (307 aa).

Disordered regions lie at residues 142-195 (QRKH…ESIT) and 287-307 (KQAAALSKSKKSEKSGAITSP). Residues 161-182 (SRLSGGSHYNSQKTLSTSSIQN) show a composition bias toward polar residues. Residues 217–299 (IIAQLKEEVA…AALSKSKKSE (83 aa)) are a coiled coil.

Belongs to the FAM76 family.

This is Protein FAM76A (FAM76A) from Bos taurus (Bovine).